Reading from the N-terminus, the 468-residue chain is Ribosomal protein uS12 methylthiotransferase RimO (468 aa).

Positions 18 to 129 (PTVAFAHLGC…IVEVLERVEA (112 aa)) constitute an MTTase N-terminal domain. Residues Cys27, Cys63, Cys92, Cys167, Cys171, and Cys174 each coordinate [4Fe-4S] cluster. A Radical SAM core domain is found at 153–382 (TTGEAVAYLK…MTLQQPISAA (230 aa)). A TRAM domain is found at 385–456 (ARWVGRTVDA…IYDLRAEIVG (72 aa)).

The protein belongs to the methylthiotransferase family. RimO subfamily. [4Fe-4S] cluster is required as a cofactor.

The protein resides in the cytoplasm. The enzyme catalyses L-aspartate(89)-[ribosomal protein uS12]-hydrogen + (sulfur carrier)-SH + AH2 + 2 S-adenosyl-L-methionine = 3-methylsulfanyl-L-aspartate(89)-[ribosomal protein uS12]-hydrogen + (sulfur carrier)-H + 5'-deoxyadenosine + L-methionine + A + S-adenosyl-L-homocysteine + 2 H(+). Functionally, catalyzes the methylthiolation of an aspartic acid residue of ribosomal protein uS12. This Synechococcus sp. (strain WH7803) protein is Ribosomal protein uS12 methylthiotransferase RimO.